A 202-amino-acid chain; its full sequence is Venom allergen 5.02 (202 aa).

Intrachain disulfides connect Cys-4-Cys-16, Cys-8-Cys-101, Cys-26-Cys-94, and Cys-168-Cys-185. The 142-residue stretch at 46 to 187 (KQHNEFRQKV…WHRHYLVCNY (142 aa)) folds into the SCP domain.

This sequence belongs to the CRISP family. Venom allergen 5-like subfamily. As to expression, expressed by the venom gland.

It is found in the secreted. The sequence is that of Venom allergen 5.02 from Vespa crabro (European hornet).